The primary structure comprises 425 residues: MANKEMFEDTVEERVINEEYKIWKKNTPFLYDLVMTHALEWPSLTVQWLPDVTRPEGKDYALHWLVLGTHTSDEQNHLVVARVQVPNDDAQFDASHYDSEKGEFGGFGSVSGKIETEIKINHEGEVNRARYMPQNPCIIATKTPSADVLVFDYTKHPSKPDPSGECSPDLRLRGHQKEGYGLSWNSNLSGHLLSASDDHTVCLWDISAGPKEGKVVDAKAVFTGHSAVVEDVAWHLLHESLFGSVADDQKLMIWDTRSNTTSKPSHSVDAHTAEVNCLSFNPYSEFILATGSADKTVALWDLRNLKLKLHSFESHKDEIFQVHWSPHNETILASSGTDRRLNVWDLSKIGEEQSAEDAEDGPPELLFIHGGHTAKISDFSWNPNEPWVICSVSEDNIMQIWQMAENIYNDEEPDIPASELEAQGS.

WD repeat units follow at residues 47 to 122 (QWLP…KINH), 128 to 173 (RARY…LRLR), 181 to 217 (GLSW…KVVD), 228 to 269 (VVED…HSVD), 275 to 312 (VNCL…LHSF), 318 to 369 (EIFQ…LFIH), and 376 to 403 (ISDF…IWQM).

This sequence belongs to the WD repeat RBAP46/RBAP48/MSI1 family. As to quaternary structure, binds directly to helix 1 of the histone fold of histone H4, a region that is not accessible when H4 is in chromatin.

Its subcellular location is the nucleus. Core histone-binding subunit that may target chromatin remodeling factors, histone acetyltransferases and histone deacetylases to their histone substrates in a manner that is regulated by nucleosomal DNA. Component of several complexes which regulate chromatin metabolism. The chain is Histone-binding protein RBBP7 (rbbp7) from Xenopus laevis (African clawed frog).